The sequence spans 250 residues: MNRPDLVLLHGWGLGPQVWSALTPYLPAGLRVRTPALPGHGGTPARGPTLEAWSDALLPELPDDAVVCGWSLGGLVALDLARRHPHKVARLVLIGTSPCFVTRPENAAAPWPYGLAASTVTGFIDDFAHDPAATLRRFVALQALGDARRRTVSNALNAALANLEQCRPAALGAGLELLADTDWRAALDDVRQPVQLIHGAGDALMPLAAAEWLATRLPDARLARFDDCGHAPFLSHPEDCAVLIEDVVRG.

Residues Trp-12, 71 to 72 (SL), and 138 to 142 (FVALQ) contribute to the substrate site. Ser-71 serves as the catalytic Nucleophile. Catalysis depends on residues Asp-202 and His-230. His-230 is a substrate binding site.

It belongs to the AB hydrolase superfamily. Carboxylesterase BioH family. As to quaternary structure, monomer.

It localises to the cytoplasm. It catalyses the reaction 6-carboxyhexanoyl-[ACP] methyl ester + H2O = 6-carboxyhexanoyl-[ACP] + methanol + H(+). Its pathway is cofactor biosynthesis; biotin biosynthesis. Its function is as follows. The physiological role of BioH is to remove the methyl group introduced by BioC when the pimeloyl moiety is complete. It allows to synthesize pimeloyl-ACP via the fatty acid synthetic pathway through the hydrolysis of the ester bonds of pimeloyl-ACP esters. The polypeptide is Pimeloyl-[acyl-carrier protein] methyl ester esterase (Aromatoleum aromaticum (strain DSM 19018 / LMG 30748 / EbN1) (Azoarcus sp. (strain EbN1))).